The primary structure comprises 851 residues: Periplasmic nitrate reductase (851 aa).

Residues 1–29 (MQSNRRDFLKAQALAASAAAAGIPIVVEA) constitute a signal peptide (tat-type signal). The 4Fe-4S Mo/W bis-MGD-type domain occupies 44 to 100 (VRWDKAPCRFCGTGCAVMVGVQEGKVVATQGDPEAPVNRGLNCIKGYFLSKIMYGRD). Residues Cys51, Cys54, Cys58, and Cys86 each contribute to the [4Fe-4S] cluster site. Mo-bis(molybdopterin guanine dinucleotide) contacts are provided by residues Lys88, Gln155, Asn180, Cys184, 217–224 (WGSNMAEM), 248–252 (STYEH), and 267–269 (QTD). Residues 317–338 (DATSNGYPGADGKPKGNPNDST) form a disordered region. Mo-bis(molybdopterin guanine dinucleotide) contacts are provided by residues Met388, Gln392, Asn498, 524 to 525 (SD), Lys547, Asp574, and 741 to 750 (TGRVLEHWHT). Phe817 is a binding site for substrate. Residues Asn825 and Lys842 each coordinate Mo-bis(molybdopterin guanine dinucleotide).

The protein belongs to the prokaryotic molybdopterin-containing oxidoreductase family. NasA/NapA/NarB subfamily. In terms of assembly, component of the periplasmic nitrate reductase NapAB complex composed of NapA and NapB. The cofactor is [4Fe-4S] cluster. Mo-bis(molybdopterin guanine dinucleotide) is required as a cofactor. In terms of processing, predicted to be exported by the Tat system. The position of the signal peptide cleavage has not been experimentally proven.

It localises to the periplasm. The catalysed reaction is 2 Fe(II)-[cytochrome] + nitrate + 2 H(+) = 2 Fe(III)-[cytochrome] + nitrite + H2O. Functionally, catalytic subunit of the periplasmic nitrate reductase complex NapAB. Receives electrons from NapB and catalyzes the reduction of nitrate to nitrite. This is Periplasmic nitrate reductase from Leptothrix cholodnii (strain ATCC 51168 / LMG 8142 / SP-6) (Leptothrix discophora (strain SP-6)).